A 129-amino-acid chain; its full sequence is MARDIVADFLSHLTNVRRKGEDKTAFFPVSNLIIKLVEIMKREGYIKNYRLVDSSRGKIIEIELSEYFNEANAIKPRFPVEYSELEKYEKRYLPALNFGRLILSTSKGLITNREAKEQKIGGVLIAYVY.

This sequence belongs to the universal ribosomal protein uS8 family. Part of the 30S ribosomal subunit.

Functionally, one of the primary rRNA binding proteins, it binds directly to 16S rRNA central domain where it helps coordinate assembly of the platform of the 30S subunit. This chain is Small ribosomal subunit protein uS8, found in Nanoarchaeum equitans (strain Kin4-M).